Reading from the N-terminus, the 316-residue chain is Meiotically up-regulated gene 154 protein (316 aa).

Helical transmembrane passes span 41–61, 88–108, 159–179, and 186–206; these read YSIP…IYIK, AFLS…FIFS, FLLN…WFYS, and LLTF…SLLL. A disordered region spans residues 291 to 316; sequence HDSGISRDSSSPFKRFPHLSDGSSRF.

It is found in the endoplasmic reticulum membrane. Its function is as follows. Has a role in meiosis. This is Meiotically up-regulated gene 154 protein (mug154) from Schizosaccharomyces pombe (strain 972 / ATCC 24843) (Fission yeast).